The following is a 652-amino-acid chain: Thioredoxin reductase 3 (652 aa).

Over residues Met1–Arg12 the composition is skewed to pro residues. Positions Met1–Glu62 are disordered. Arg34 is subject to Asymmetric dimethylarginine; alternate. Arg34 carries the omega-N-methylarginine; alternate modification. Ser50 is subject to Phosphoserine. Positions Arg65–Asp165 constitute a Glutaredoxin domain. Asp167 to Phe196 lines the FAD pocket. Cys212 and Cys217 are oxidised to a cystine. Lys388 carries the post-translational modification N6-succinyllysine. The active-site Proton acceptor is the His625. The cysteinyl-selenocysteine (Cys-Sec) cross-link spans Cys650–Sec651. Sec651 is a non-standard amino acid (selenocysteine).

The protein belongs to the class-I pyridine nucleotide-disulfide oxidoreductase family. Homodimer. It depends on FAD as a cofactor. Expressed preferentially in testis where it is found in spermatids and spermatocytes but not in sperm. In elongating spermatids, expressed at the site of mitochondrial sheath formation. Low levels in other tissues including heart, lung, liver, kidney, brain, muscle and prostate.

Its subcellular location is the cytoplasm. The protein localises to the nucleus. It localises to the microsome. It is found in the endoplasmic reticulum. The catalysed reaction is [thioredoxin]-dithiol + NADP(+) = [thioredoxin]-disulfide + NADPH + H(+). Its function is as follows. Displays thioredoxin reductase, glutaredoxin and glutathione reductase activities. Catalyzes disulfide bond isomerization. Promotes disulfide bond formation between GPX4 and various sperm proteins and may play a role in sperm maturation by promoting formation of sperm structural components. The sequence is that of Thioredoxin reductase 3 from Mus musculus (Mouse).